Reading from the N-terminus, the 363-residue chain is Aspartate-semialdehyde dehydrogenase (363 aa).

The NADP(+) site is built by Thr-15, Gly-16, Ser-17, Val-18, Ser-40, Ser-43, and Leu-87. The active-site Acyl-thioester intermediate is the Cys-154. Residue Gly-186 participates in NADP(+) binding. Catalysis depends on His-251, which acts as the Proton acceptor. Asn-341 serves as a coordination point for NADP(+).

The protein belongs to the aspartate-semialdehyde dehydrogenase family. In terms of assembly, homotetramer; dimer of dimers.

It localises to the cytoplasm. The protein resides in the cytosol. It is found in the nucleus. The enzyme catalyses L-aspartate 4-semialdehyde + phosphate + NADP(+) = 4-phospho-L-aspartate + NADPH + H(+). It participates in amino-acid biosynthesis; L-methionine biosynthesis via de novo pathway; L-homoserine from L-aspartate: step 2/3. Its pathway is amino-acid biosynthesis; L-threonine biosynthesis; L-threonine from L-aspartate: step 2/5. With respect to regulation, inhibited by 4-amino-3-hydroxynaphthalene-1-sulfonic acid and the competitive inhibitor 1,4-benzoquinone and derivates such as 2-chloro-3-methoxy-1,4-naphthoquinone, 2,3-dichloro-1,4-naphthoquinone, 2-chloro-1,4-naphthoquinone, 2-bromo-1,4-naphthoquinone and 2,3-dichloro-5,8-dihydroxy-1,4-naphthoquinone. In terms of biological role, catalyzes the NADPH-dependent formation of L-aspartate 4-semialdehyde (L-ASA) by the reductive dephosphorylation of 4-phospho-L-aspartate. Mediates the second step in the biosynthesis of amino acids that derive from aspartate (the aspartate family of amino acids), including methioinine and threonine, the latter of which is a precursor to isoleucine. The polypeptide is Aspartate-semialdehyde dehydrogenase (Aspergillus fumigatus (strain ATCC MYA-4609 / CBS 101355 / FGSC A1100 / Af293) (Neosartorya fumigata)).